Reading from the N-terminus, the 369-residue chain is Succinyl-diaminopimelate desuccinylase (369 aa).

Residue His77 coordinates Zn(2+). Asp79 is an active-site residue. Position 103 (Asp103) interacts with Zn(2+). Glu136 functions as the Proton acceptor in the catalytic mechanism. Residues Glu137, Glu165, and His345 each coordinate Zn(2+).

Belongs to the peptidase M20A family. It depends on Zn(2+) as a cofactor. The cofactor is Co(2+).

The catalysed reaction is N-succinyl-(2S,6S)-2,6-diaminopimelate + H2O = (2S,6S)-2,6-diaminopimelate + succinate. It functions in the pathway amino-acid biosynthesis; L-lysine biosynthesis via DAP pathway; LL-2,6-diaminopimelate from (S)-tetrahydrodipicolinate (succinylase route): step 3/3. In Corynebacterium glutamicum (strain ATCC 13032 / DSM 20300 / JCM 1318 / BCRC 11384 / CCUG 27702 / LMG 3730 / NBRC 12168 / NCIMB 10025 / NRRL B-2784 / 534), this protein is Succinyl-diaminopimelate desuccinylase (dapE).